Consider the following 172-residue polypeptide: MORN repeat-containing protein 5 (172 aa).

MORN repeat units follow at residues 8 to 30, 31 to 53, and 54 to 75; these read YIGE…TETK, YIGE…NGSR, and FDAV…DGLQ.

The protein resides in the cell projection. It is found in the cilium. Its subcellular location is the flagellum. This chain is MORN repeat-containing protein 5 (MORN5), found in Bos taurus (Bovine).